A 403-amino-acid polypeptide reads, in one-letter code: Serine/threonine transporter SstT (403 aa).

9 consecutive transmembrane segments (helical) span residues 14 to 34, 44 to 64, 79 to 99, 138 to 158, 175 to 195, 214 to 234, 295 to 315, 327 to 347, and 353 to 373; these read VTQI…APAI, VFVS…VMAS, ILWL…FASM, ALLN…GVAL, GVTL…FGLV, LAVL…LIVF, MAGA…TLGI, VVAA…LLLI, and LFGI…IIGV.

It belongs to the dicarboxylate/amino acid:cation symporter (DAACS) (TC 2.A.23) family.

It localises to the cell inner membrane. The catalysed reaction is L-serine(in) + Na(+)(in) = L-serine(out) + Na(+)(out). The enzyme catalyses L-threonine(in) + Na(+)(in) = L-threonine(out) + Na(+)(out). Its function is as follows. Involved in the import of serine and threonine into the cell, with the concomitant import of sodium (symport system). The polypeptide is Serine/threonine transporter SstT (Pseudomonas putida (strain ATCC 47054 / DSM 6125 / CFBP 8728 / NCIMB 11950 / KT2440)).